A 453-amino-acid polypeptide reads, in one-letter code: Glutamyl-tRNA(Gln) amidotransferase subunit A (453 aa).

Active-site charge relay system residues include lysine 56 and serine 131. Catalysis depends on serine 155, which acts as the Acyl-ester intermediate.

It belongs to the amidase family. GatA subfamily. Heterotrimer of A, B and C subunits.

The enzyme catalyses L-glutamyl-tRNA(Gln) + L-glutamine + ATP + H2O = L-glutaminyl-tRNA(Gln) + L-glutamate + ADP + phosphate + H(+). Functionally, allows the formation of correctly charged Gln-tRNA(Gln) through the transamidation of misacylated Glu-tRNA(Gln) in organisms which lack glutaminyl-tRNA synthetase. The reaction takes place in the presence of glutamine and ATP through an activated gamma-phospho-Glu-tRNA(Gln). This Campylobacter jejuni (strain RM1221) protein is Glutamyl-tRNA(Gln) amidotransferase subunit A.